Consider the following 366-residue polypeptide: Inhibin alpha chain (366 aa).

A signal peptide spans 1–18 (MVLHLLLFLLLTPQGGHS). A propeptide spanning residues 19-61 (CQGLELARELVLAKVRALFLDALGPPAVTREGGDPGVRRLPRR) is cleaved from the precursor. The propeptide at 62–232 (HALGGFTHRG…PPSGGERARR (171 aa)) is inhibin alpha N-terminal region. 2 N-linked (GlcNAc...) asparagine glycosylation sites follow: Asn146 and Asn268. Disulfide bonds link Cys262–Cys328, Cys291–Cys363, and Cys295–Cys365. Asn302 is a glycosylation site (N-linked (GlcNAc...) asparagine; partial).

This sequence belongs to the TGF-beta family. As to quaternary structure, dimeric, linked by one or more disulfide bonds. Activin B is a dimer of alpha and beta-B. Inhibin A is a dimer of alpha and beta-A. Inhibin B is a dimer of alpha and beta-B. Interacts with TGFBR3L; this interaction regulates female fertility. Post-translationally, proteolytic processing yields a number of bioactive forms. The 20/23 kDa forms consist solely of the mature alpha chain, the 26/29 kDa forms consist of the most N-terminal propeptide linked through a disulfide bond to the mature alpha chain, the 50/53 kDa forms encompass the entire proprotein. Each type can be furthermore either mono- or diglycosylated, causing the mass difference. As to expression, originally found in ovary (granulosa cells) and testis (Sertoli cells), but widely distributed in many tissues including brain and placenta. In adrenal cortex expression is limited to the zona reticularis and the innermost zona fasciculata in the normal gland, extending centripetally into the zona fasciculata in hyperplasia. Also found in adrenocortical tumors. Also expressed in prostate epithelium of benign prostatic hyperplasia, in regions of basal cell hyperplasia and in nonmalignant regions of high grade prostate cancer. Only circulating inhibin B is found in male, whereas circulating inhibins A and B are found in female.

The protein resides in the secreted. In terms of biological role, inhibins and activins inhibit and activate, respectively, the secretion of follitropin by the pituitary gland. Inhibins/activins are involved in regulating a number of diverse functions such as hypothalamic and pituitary hormone secretion, gonadal hormone secretion, germ cell development and maturation, erythroid differentiation, insulin secretion, nerve cell survival, embryonic axial development or bone growth, depending on their subunit composition. Inhibins appear to oppose the functions of activins. Its function is as follows. Inhibin A is a dimer of alpha/INHA and beta-A/INHBA that functions as a feedback regulator in the hypothalamic-pituitary-gonadal (HPG) axis. Inhibits the secretion of FSH from the anterior pituitary gland by acting on pituitary gonadotrope cells. Antagonizes activin A by binding to the proteoglycan, betaglycan, and forming a stable complex with and, thereby, sequestering type II activin receptors while excluding type I receptor. Inhibin B is a dimer of alpha and beta-B that plays a crucial role in the regulation of the reproductive system by inhibiting the secretion of follicle-stimulating hormone (FSH) from the anterior pituitary gland. Thereby, maintains reproductive homeostasis in both males and females. Acts as a more potent suppressor of FSH release than inhibin A. Functions as competitive receptor antagonist binding activin type II receptors with high affinity in the presence of the TGF-beta type III coreceptor/TGFBR3L. The polypeptide is Inhibin alpha chain (INHA) (Homo sapiens (Human)).